The chain runs to 270 residues: Interleukin-1 alpha (270 aa).

A propeptide spanning residues 1-114 (MAKVPDLFED…HDLEETIQPR (114 aa)) is cleaved from the precursor. N64 carries N-linked (GlcNAc...) asparagine glycosylation. N6-acetyllysine is present on K85. Positions 85 to 89 (KKRRL) are nuclear localization signal (NLS). Phosphoserine is present on S90. N-linked (GlcNAc...) asparagine glycosylation is found at N139 and N143.

It belongs to the IL-1 family. As to quaternary structure, monomer. Interacts with TMED10; the interaction mediates the translocation from the cytoplasm into the ERGIC (endoplasmic reticulum-Golgi intermediate compartment) and thereby secretion. Interacts with IL1R1. Interacts with S100A13; this interaction is the first step in the export of IL1A, followed by direct translocation of this complex across the plasma membrane. Post-translationally, acetylated within its nuclear localization sequence, which impacts subcellular localization. In terms of processing, proteolytic processed by CAPN1 in a calcium-dependent manner. Cleavage from 31 kDa precursor to 18 kDa biologically active molecules. Phosphorylated. Phosphorylation greatly enhances susceptibility to digestion and promotes the conversion of pre-IL1A alpha to the biologically active IL1A.

Its subcellular location is the nucleus. It is found in the cytoplasm. It localises to the secreted. Its function is as follows. Cytokine constitutively present intracellularly in nearly all resting non-hematopoietic cells that plays an important role in inflammation and bridges the innate and adaptive immune systems. After binding to its receptor IL1R1 together with its accessory protein IL1RAP, forms the high affinity interleukin-1 receptor complex. Signaling involves the recruitment of adapter molecules such as MYD88, IRAK1 or IRAK4. In turn, mediates the activation of NF-kappa-B and the three MAPK pathways p38, p42/p44 and JNK pathways. Within the cell, acts as an alarmin and cell death results in its liberation in the extracellular space after disruption of the cell membrane to induce inflammation and alert the host to injury or damage. In addition to its role as a danger signal, which occurs when the cytokine is passively released by cell necrosis, directly senses DNA damage and acts as a signal for genotoxic stress without loss of cell integrity. This is Interleukin-1 alpha from Mus musculus (Mouse).